We begin with the raw amino-acid sequence, 498 residues long: ATP synthase subunit beta, chloroplastic (498 aa).

An ATP-binding site is contributed by 172–179 (GGAGVGKT).

Belongs to the ATPase alpha/beta chains family. As to quaternary structure, F-type ATPases have 2 components, CF(1) - the catalytic core - and CF(0) - the membrane proton channel. CF(1) has five subunits: alpha(3), beta(3), gamma(1), delta(1), epsilon(1). CF(0) has four main subunits: a(1), b(1), b'(1) and c(9-12).

Its subcellular location is the plastid. The protein resides in the chloroplast thylakoid membrane. The enzyme catalyses ATP + H2O + 4 H(+)(in) = ADP + phosphate + 5 H(+)(out). Produces ATP from ADP in the presence of a proton gradient across the membrane. The catalytic sites are hosted primarily by the beta subunits. The sequence is that of ATP synthase subunit beta, chloroplastic from Oenothera biennis (German evening primrose).